The following is a 104-amino-acid chain: Transcription and mRNA export factor ENY2 (104 aa).

Over residues 1–14 (MADYGSDKKSRDNQ) the composition is skewed to basic and acidic residues. A disordered region spans residues 1–22 (MADYGSDKKSRDNQMRSAINQQ).

Belongs to the ENY2 family. In terms of assembly, component of the nuclear pore complex (NPC)-associated TREX-2 complex (transcription and export complex 2). Component of the SAGA transcription coactivator-HAT complex. Within the SAGA complex, participates in a subcomplex of SAGA called the DUB module (deubiquitination module).

The protein resides in the nucleus. It localises to the nucleoplasm. Involved in mRNA export coupled transcription activation by association with both the TREX-2 and the SAGA complexes. The transcription regulatory histone acetylation (HAT) complex SAGA is a multiprotein complex that activates transcription by remodeling chromatin and mediating histone acetylation and deubiquitination. Within the SAGA complex, participates in a subcomplex that specifically deubiquitinates histones. The SAGA complex is recruited to specific gene promoters by activators, where it is required for transcription. The TREX-2 complex functions in docking export-competent ribonucleoprotein particles (mRNPs) to the nuclear entrance of the nuclear pore complex (nuclear basket). TREX-2 participates in mRNA export and accurate chromatin positioning in the nucleus by tethering genes to the nuclear periphery. This is Transcription and mRNA export factor ENY2 from Ciona intestinalis (Transparent sea squirt).